Here is a 200-residue protein sequence, read N- to C-terminus: Small ribosomal subunit protein eS1 (200 aa).

This sequence belongs to the eukaryotic ribosomal protein eS1 family.

This Thermococcus onnurineus (strain NA1) protein is Small ribosomal subunit protein eS1.